The chain runs to 316 residues: MTVQPTTIGIVGARGHTGAELIKLIAAHPQLQLVFVSSRELAGQRVAEHSDGYQGELRYESLDADAVAAKAADVVILALPNGKAEPFVAAIDASRPQTLLIDLSADYRFDPAWYYGLPELTRHTYAGQRRISNPGCYATAMQLAITPLREQLAGPPQCFGVSGYSGAGTTPSDKNNPALLADNLMPYALTNHMHEREVSAQLGVPVEFMPHVAPHFRGITMTVNLWLQQPLTREQIHARYLERYAHEPLIEIVDEAPWVSRIAGTHGVQIGGFTVAPGNKRVVVVATLDNLLKGAATQAMQNLNLALGWDELTAIG.

Cysteine 136 is a catalytic residue.

The protein belongs to the NAGSA dehydrogenase family. Type 1 subfamily.

Its subcellular location is the cytoplasm. It catalyses the reaction N-acetyl-L-glutamate 5-semialdehyde + phosphate + NADP(+) = N-acetyl-L-glutamyl 5-phosphate + NADPH + H(+). It functions in the pathway amino-acid biosynthesis; L-arginine biosynthesis; N(2)-acetyl-L-ornithine from L-glutamate: step 3/4. Catalyzes the NADPH-dependent reduction of N-acetyl-5-glutamyl phosphate to yield N-acetyl-L-glutamate 5-semialdehyde. This Xanthomonas campestris pv. campestris (strain B100) protein is N-acetyl-gamma-glutamyl-phosphate reductase.